The chain runs to 776 residues: Protein SEY1 (776 aa).

Residues 1–681 are Cytoplasmic-facing; sequence MADRSAIQLI…KRSIITTRTH (681 aa). In terms of domain architecture, GB1/RHD3-type G spans 34 to 263; it reads GLDYHVISVF…TENYYFKPQY (230 aa). Residue 44 to 51 participates in GTP binding; it reads GSQSSGKS. Residues 682 to 702 form a helical membrane-spanning segment; the sequence is IPPWIYVLLAVLGWNEFVAVI. Over 703–705 the chain is Lumenal; it reads RNP. Residues 706–726 traverse the membrane as a helical segment; it reads LFVTLTLILGATFFVIHKFGL. Topologically, residues 727 to 776 are cytoplasmic; sequence WGPVVNVVQSAVGETRTAIKDKLRQFVVEDHEVKESFEMKDFSKNEQKEK.

This sequence belongs to the TRAFAC class dynamin-like GTPase superfamily. GB1/RHD3 GTPase family. RHD3 subfamily. As to quaternary structure, interacts with RTN1 and YOP1; GTP binding is not required for these interactions.

It localises to the endoplasmic reticulum membrane. Functionally, cooperates with the reticulon proteins RTN1 and RTN2 and the tubule-shaping DP1 family protein YOP1 to generate and maintain the structure of the tubular endoplasmic reticulum network. Has GTPase activity, which is required for its function in ER organization. This is Protein SEY1 from Saccharomyces cerevisiae (strain YJM789) (Baker's yeast).